A 736-amino-acid chain; its full sequence is Eukaryotic translation initiation factor 3 subunit B (736 aa).

Positions 1–94 (MAAVFDDIRL…LFIEFEDAGA (94 aa)) are sufficient for interaction with HCR1 and TIF32. The interval 1–219 (MAAVFDDIRL…GIASWGGPQF (219 aa)) is sufficient for interaction with PIC8. Positions 37 to 120 (RYVVVDGAPV…HRLWVNGLDD (84 aa)) constitute an RRM domain. WD repeat units lie at residues 140-182 (EFEA…PENV), 186-224 (RRNW…RLRR), 226-244 (AHPD…YLVT), 245-284 (FSSE…CVKT), 288-328 (PPQQ…QLLG), 332-375 (MKIE…QSCK), 443-483 (EIKD…VSFY), 511-557 (AIDG…TEKI), 566-604 (ATLR…KAEN), and 616-662 (VREE…QDAM).

Belongs to the eIF-3 subunit B family. In terms of assembly, component of the eukaryotic translation initiation factor 3 (eIF-3) complex.

The protein resides in the cytoplasm. Functionally, RNA-binding component of the eukaryotic translation initiation factor 3 (eIF-3) complex, which is involved in protein synthesis of a specialized repertoire of mRNAs and, together with other initiation factors, stimulates binding of mRNA and methionyl-tRNAi to the 40S ribosome. The eIF-3 complex specifically targets and initiates translation of a subset of mRNAs involved in cell proliferation. The protein is Eukaryotic translation initiation factor 3 subunit B of Eremothecium gossypii (strain ATCC 10895 / CBS 109.51 / FGSC 9923 / NRRL Y-1056) (Yeast).